We begin with the raw amino-acid sequence, 331 residues long: Adenosine deaminase (331 aa).

Zn(2+) contacts are provided by His12 and His14. His14, Asp16, and Gly170 together coordinate substrate. Zn(2+) is bound at residue His197. The active-site Proton donor is the Glu200. Asp278 provides a ligand contact to Zn(2+). Asp279 contributes to the substrate binding site.

The protein belongs to the metallo-dependent hydrolases superfamily. Adenosine and AMP deaminases family. Adenosine deaminase subfamily. It depends on Zn(2+) as a cofactor.

The enzyme catalyses adenosine + H2O + H(+) = inosine + NH4(+). It carries out the reaction 2'-deoxyadenosine + H2O + H(+) = 2'-deoxyinosine + NH4(+). Its function is as follows. Catalyzes the hydrolytic deamination of adenosine and 2-deoxyadenosine. The protein is Adenosine deaminase of Shewanella oneidensis (strain ATCC 700550 / JCM 31522 / CIP 106686 / LMG 19005 / NCIMB 14063 / MR-1).